The following is a 398-amino-acid chain: Vacuolar protease A (398 aa).

The first 18 residues, 1 to 18 (MKSTSLLTASVLLGSASA), serve as a signal peptide directing secretion. The propeptide at 19–70 (AVHKLKLNKVPLDEQLYTHNIDAHVRALGQKYMGIRPNVHQELLEENSLNDM) is activation peptide. The region spanning 85-395 (YFSEISLGTP…DLGNNAVGLA (311 aa)) is the Peptidase A1 domain. Aspartate 103 is an active-site residue. A disulfide bridge links cysteine 116 with cysteine 121. The N-linked (GlcNAc...) asparagine glycan is linked to asparagine 138. Aspartate 287 is an active-site residue. A disulfide bridge connects residues cysteine 321 and cysteine 354. N-linked (GlcNAc...) asparagine glycosylation is present at asparagine 338.

This sequence belongs to the peptidase A1 family.

The protein localises to the vacuole lumen. The protein resides in the secreted. The enzyme catalyses Hydrolysis of proteins with broad specificity for peptide bonds. Cleaves -Leu-Leu-|-Val-Tyr- bond in a synthetic substrate. Does not act on esters of Tyr or Arg.. Vacuolar aspartic endopeptidase which is probably also secreted and contributes to virulence. The polypeptide is Vacuolar protease A (pep2) (Aspergillus fumigatus (strain ATCC MYA-4609 / CBS 101355 / FGSC A1100 / Af293) (Neosartorya fumigata)).